The primary structure comprises 42 residues: Iota-conotoxin-like R11.16 (42 aa).

4 disulfide bridges follow: Cys5–Cys19, Cys12–Cys22, Cys18–Cys27, and Cys21–Cys36.

This sequence belongs to the conotoxin I1 superfamily. Expressed by the venom duct.

Its subcellular location is the secreted. Functionally, iota-conotoxins bind to voltage-gated sodium channels (Nav) and act as agonists by shifting the voltage-dependence of activation to more hyperpolarized levels. Produces general excitatory symptoms. The chain is Iota-conotoxin-like R11.16 from Conus radiatus (Rayed cone).